A 360-amino-acid polypeptide reads, in one-letter code: Phosphoserine aminotransferase (360 aa).

R42 lines the L-glutamate pocket. Residues W102, T152, D171, and Q194 each coordinate pyridoxal 5'-phosphate. K195 is subject to N6-(pyridoxal phosphate)lysine. Position 237-238 (237-238 (NT)) interacts with pyridoxal 5'-phosphate.

The protein belongs to the class-V pyridoxal-phosphate-dependent aminotransferase family. SerC subfamily. As to quaternary structure, homodimer. The cofactor is pyridoxal 5'-phosphate.

Its subcellular location is the cytoplasm. The catalysed reaction is O-phospho-L-serine + 2-oxoglutarate = 3-phosphooxypyruvate + L-glutamate. It carries out the reaction 4-(phosphooxy)-L-threonine + 2-oxoglutarate = (R)-3-hydroxy-2-oxo-4-phosphooxybutanoate + L-glutamate. The protein operates within amino-acid biosynthesis; L-serine biosynthesis; L-serine from 3-phospho-D-glycerate: step 2/3. It functions in the pathway cofactor biosynthesis; pyridoxine 5'-phosphate biosynthesis; pyridoxine 5'-phosphate from D-erythrose 4-phosphate: step 3/5. In terms of biological role, catalyzes the reversible conversion of 3-phosphohydroxypyruvate to phosphoserine and of 3-hydroxy-2-oxo-4-phosphonooxybutanoate to phosphohydroxythreonine. The polypeptide is Phosphoserine aminotransferase (Coxiella burnetii (strain RSA 331 / Henzerling II)).